The chain runs to 300 residues: Ribosomal protein bS6--L-glutamate ligase (300 aa).

The region spanning 104–287 is the ATP-grasp domain; sequence MQLLARQGID…IASKMIRWIE (184 aa). ATP is bound by residues K141, 178 to 179, D187, and 211 to 213; these read EY and RSN. Mg(2+) contacts are provided by D248, E260, and N262. The Mn(2+) site is built by D248, E260, and N262.

The protein belongs to the RimK family. It depends on Mg(2+) as a cofactor. Mn(2+) is required as a cofactor.

Functionally, an L-glutamate ligase that catalyzes the ATP-dependent post-translational addition of glutamate residues to the C-terminus of ribosomal protein bS6 (RpsF). Is also able to catalyze the synthesis of poly-alpha-glutamate in vitro, via ATP hydrolysis from unprotected glutamate as substrate. The number of glutamate residues added to either RpsF or to poly-alpha-glutamate changes with pH. In Escherichia coli O81 (strain ED1a), this protein is Ribosomal protein bS6--L-glutamate ligase.